Reading from the N-terminus, the 745-residue chain is TonB-dependent heme receptor A (745 aa).

An N-terminal signal peptide occupies residues 1–24 (MNILINKRIFLLVTLVGIQLNVTA). The TBDR plug domain maps to 45–157 (DDSNKLPGRS…FAGTVKFETK (113 aa)). One can recognise a TBDR beta-barrel domain in the interval 168–745 (KIGGFLKYGN…NIKFSLSQKF (578 aa)).

The protein belongs to the TonB-dependent receptor family.

It localises to the cell outer membrane. In terms of biological role, heme receptor. This Haemophilus influenzae (strain 86-028NP) protein is TonB-dependent heme receptor A (tdhA).